Here is a 261-residue protein sequence, read N- to C-terminus: Kallikrein 1-related peptidase b21 (261 aa).

An N-terminal signal peptide occupies residues 1–17 (MRFLILFLALSLGEIDA). The propeptide at 18-24 (APPVQSR) is activation peptide. The Peptidase S1 domain occupies 25–258 (IVGGFNCEKN…FTSWIKDTMA (234 aa)). Intrachain disulfides connect Cys-31–Cys-173, Cys-50–Cys-66, Cys-152–Cys-219, Cys-184–Cys-198, and Cys-209–Cys-234. The active-site Charge relay system is the His-65. Residue Asn-102 is glycosylated (N-linked (GlcNAc...) asparagine). The active-site Charge relay system is Asp-120. Ser-213 serves as the catalytic Charge relay system.

Belongs to the peptidase S1 family. Kallikrein subfamily. In terms of tissue distribution, expressed in testis and submaxillary gland. In the testis, expression localized specifically to Leydig cells in the interstitial tissues.

The catalysed reaction is Preferential cleavage of Arg-|-Xaa bonds in small molecule substrates. Highly selective action to release kallidin (lysyl-bradykinin) from kininogen involves hydrolysis of Met-|-Xaa or Leu-|-Xaa.. Inhibited by protease inhibitors diisopropylfluorophosphate, leupeptin, antipain, benzamidine, phenylmethylsulfonyl fluoride and soybean trypsin inhibitor. Glandular kallikreins cleave Met-Lys and Arg-Ser bonds in kininogen to release Lys-bradykinin. Displays trypsin-like substrate specificity and shows activity towards casein, gelatin, fibronectin and IGFBP3. In Mus musculus (Mouse), this protein is Kallikrein 1-related peptidase b21 (Klk1b21).